The sequence spans 139 residues: Transcription antitermination protein NusB (139 aa).

It belongs to the NusB family.

Involved in transcription antitermination. Required for transcription of ribosomal RNA (rRNA) genes. Binds specifically to the boxA antiterminator sequence of the ribosomal RNA (rrn) operons. The sequence is that of Transcription antitermination protein NusB from Rubrobacter xylanophilus (strain DSM 9941 / JCM 11954 / NBRC 16129 / PRD-1).